Here is a 406-residue protein sequence, read N- to C-terminus: Tyrosine--tRNA ligase (406 aa).

Y35 is an L-tyrosine binding site. The 'HIGH' region signature appears at 40 to 49 (ATSASLHIGH). L-tyrosine contacts are provided by Y167 and Q171. The short motif at 227 to 231 (KMGKS) is the 'KMSKS' region element. Position 230 (K230) interacts with ATP. Residues 341–405 (ILLVDLMVLA…IGKKKILRIV (65 aa)) form the S4 RNA-binding domain.

It belongs to the class-I aminoacyl-tRNA synthetase family. TyrS type 1 subfamily. In terms of assembly, homodimer.

Its subcellular location is the cytoplasm. It catalyses the reaction tRNA(Tyr) + L-tyrosine + ATP = L-tyrosyl-tRNA(Tyr) + AMP + diphosphate + H(+). Catalyzes the attachment of tyrosine to tRNA(Tyr) in a two-step reaction: tyrosine is first activated by ATP to form Tyr-AMP and then transferred to the acceptor end of tRNA(Tyr). The protein is Tyrosine--tRNA ligase of Borrelia duttonii (strain Ly).